The sequence spans 83 residues: Turripeptide Lol11.2 (83 aa).

The signal sequence occupies residues 1 to 27 (MARLMMTVGCLIFIVVLLDMMVPVSNT).

This sequence belongs to the conopeptide I2-like superfamily. Post-translationally, contains 4 disulfide bonds. In terms of tissue distribution, expressed by the venom duct.

The protein localises to the secreted. In terms of biological role, acts as a neurotoxin by inhibiting voltage-gated potassium channels (Kv). The polypeptide is Turripeptide Lol11.2 (Iotyrris olangoensis (Sea snail)).